The primary structure comprises 519 residues: General transcription factor 3C polypeptide 5 (519 aa).

A2 carries the post-translational modification N-acetylalanine. The segment at 465-519 is disordered; sequence ALFSSSAKADGGKEQLTYESGEDEEDEEEEEEEEEDFKPSDGSENEMETEILDYV. Acidic residues-rich tracts occupy residues 484 to 500 and 507 to 519; these read SGED…EEED and SENE…LDYV.

Belongs to the TFIIIC subunit 5 family. As to quaternary structure, part of the TFIIIC subcomplex TFIIIC2, consisting of six subunits, GTF3C1, GTF3C2, GTF3C3, GTF3C4, GTF3C5 and GTF3C6. Interacts with BRF1, GTF3C6 and TBP.

It localises to the nucleus. Involved in RNA polymerase III-mediated transcription. Integral, tightly associated component of the DNA-binding TFIIIC2 subcomplex that directly binds tRNA and virus-associated RNA promoters. The polypeptide is General transcription factor 3C polypeptide 5 (GTF3C5) (Homo sapiens (Human)).